We begin with the raw amino-acid sequence, 176 residues long: MDLPGPIHDILLVFLGSGLILGGLGVVLFTNPIFSAFSLGLVLVCISLFHILSNSYFVAAAQLLIYVGAVNVLIIFAVMFMNGSEYYNDFYLWTVGDGVTSLVCTSILFSLITTISDTSWYGIIWTTGSNQIIEQDLISNVQQIGIHLSTDFYLPFELISIILLVALIGAIAMARQ.

5 consecutive transmembrane segments (helical) span residues 10-30, 32-52, 61-81, 92-112, and 152-172; these read ILLVFLGSGLILGGLGVVLFT, PIFSAFSLGLVLVCISLFHIL, AQLLIYVGAVNVLIIFAVMFM, LWTVGDGVTSLVCTSILFSLI, and FYLPFELISIILLVALIGAIA.

Belongs to the complex I subunit 6 family. In terms of assembly, NDH is composed of at least 16 different subunits, 5 of which are encoded in the nucleus.

It is found in the plastid. It localises to the chloroplast thylakoid membrane. The enzyme catalyses a plastoquinone + NADH + (n+1) H(+)(in) = a plastoquinol + NAD(+) + n H(+)(out). It carries out the reaction a plastoquinone + NADPH + (n+1) H(+)(in) = a plastoquinol + NADP(+) + n H(+)(out). NDH shuttles electrons from NAD(P)H:plastoquinone, via FMN and iron-sulfur (Fe-S) centers, to quinones in the photosynthetic chain and possibly in a chloroplast respiratory chain. The immediate electron acceptor for the enzyme in this species is believed to be plastoquinone. Couples the redox reaction to proton translocation, and thus conserves the redox energy in a proton gradient. This chain is NAD(P)H-quinone oxidoreductase subunit 6, chloroplastic (ndhG), found in Drimys granadensis.